Reading from the N-terminus, the 255-residue chain is Large ribosomal subunit protein uL4 (255 aa).

The protein belongs to the universal ribosomal protein uL4 family. In terms of assembly, part of the 50S ribosomal subunit.

Its function is as follows. One of the primary rRNA binding proteins, this protein initially binds near the 5'-end of the 23S rRNA. It is important during the early stages of 50S assembly. It makes multiple contacts with different domains of the 23S rRNA in the assembled 50S subunit and ribosome. Functionally, forms part of the polypeptide exit tunnel. This is Large ribosomal subunit protein uL4 from Pyrococcus horikoshii (strain ATCC 700860 / DSM 12428 / JCM 9974 / NBRC 100139 / OT-3).